Reading from the N-terminus, the 230-residue chain is Small ribosomal subunit protein uS3c (230 aa).

In terms of domain architecture, KH type-2 spans 39–109; it reads IRSFIHGKLS…QIRVNVVEIS (71 aa).

This sequence belongs to the universal ribosomal protein uS3 family. In terms of assembly, part of the 30S ribosomal subunit.

It is found in the plastid. The protein localises to the chloroplast. The sequence is that of Small ribosomal subunit protein uS3c (rps3) from Porphyra purpurea (Red seaweed).